A 289-amino-acid polypeptide reads, in one-letter code: NAD kinase (289 aa).

D68 (proton acceptor) is an active-site residue. Residues 68–69, K73, 142–143, R153, D172, 183–188, and Q243 contribute to the NAD(+) site; these read DG, ND, and TAYSLS.

This sequence belongs to the NAD kinase family. The cofactor is a divalent metal cation.

Its subcellular location is the cytoplasm. It carries out the reaction NAD(+) + ATP = ADP + NADP(+) + H(+). In terms of biological role, involved in the regulation of the intracellular balance of NAD and NADP, and is a key enzyme in the biosynthesis of NADP. Catalyzes specifically the phosphorylation on 2'-hydroxyl of the adenosine moiety of NAD to yield NADP. The sequence is that of NAD kinase from Acetivibrio thermocellus (strain ATCC 27405 / DSM 1237 / JCM 9322 / NBRC 103400 / NCIMB 10682 / NRRL B-4536 / VPI 7372) (Clostridium thermocellum).